A 232-amino-acid chain; its full sequence is Small ribosomal subunit protein uS3 (232 aa).

The region spanning 39-107 is the KH type-2 domain; sequence VRQFLTKELQ…PAQINIAEVR (69 aa). A disordered region spans residues 213–232; it reads AANAVEPKGDKPKKQRKGRK.

The protein belongs to the universal ribosomal protein uS3 family. As to quaternary structure, part of the 30S ribosomal subunit. Forms a tight complex with proteins S10 and S14.

In terms of biological role, binds the lower part of the 30S subunit head. Binds mRNA in the 70S ribosome, positioning it for translation. This Vibrio campbellii (strain ATCC BAA-1116) protein is Small ribosomal subunit protein uS3.